A 355-amino-acid chain; its full sequence is Mitochondrial import inner membrane translocase subunit TIM50 (355 aa).

The transit peptide at 1 to 44 directs the protein to the mitochondrion; it reads MAASAAVFLRLRSGLRQGARGLCARLATPPPRAPDQAAEIGSRA. Residues 25-61 are disordered; the sequence is RLATPPPRAPDQAAEIGSRAGTKAQTQGPQQQRSSEG. At 45–67 the chain is on the mitochondrial matrix side; sequence GTKAQTQGPQQQRSSEGPSYAKK. The segment covering 47–61 has biased composition (polar residues); sequence KAQTQGPQQQRSSEG. A helical transmembrane segment spans residues 68 to 88; sequence VALWLARLLGAGGTVSVIYIF. Over 89–355 the chain is Mitochondrial intermembrane; that stretch reads GNNAVDENGA…SRLWPRSKQP (267 aa). The 144-residue stretch at 145–288 folds into the FCP1 homology domain; that stretch reads YYQPPYTLVL…LDLSAFLKTI (144 aa). S343 bears the Phosphoserine mark.

It belongs to the TIM50 family. As to quaternary structure, component of the TIM23 complex at least composed of TIMM23, TIMM17 (TIMM17A or TIMM17B) and TIMM50; within this complex, directly interacts with TIMM23. The complex interacts with the TIMM44 component of the PAM complex and with DNAJC15.

Its subcellular location is the mitochondrion inner membrane. Functionally, essential component of the TIM23 complex, a complex that mediates the translocation of transit peptide-containing proteins across the mitochondrial inner membrane. Has some phosphatase activity in vitro; however such activity may not be relevant in vivo. The polypeptide is Mitochondrial import inner membrane translocase subunit TIM50 (TIMM50) (Bos taurus (Bovine)).